A 285-amino-acid chain; its full sequence is DNA repair protein RecO (285 aa).

Belongs to the RecO family.

In terms of biological role, involved in DNA repair and RecF pathway recombination. The sequence is that of DNA repair protein RecO from Synechococcus sp. (strain JA-2-3B'a(2-13)) (Cyanobacteria bacterium Yellowstone B-Prime).